A 426-amino-acid chain; its full sequence is Enolase (426 aa).

Gln-165 lines the (2R)-2-phosphoglycerate pocket. The Proton donor role is filled by Glu-209. Asp-244, Glu-287, and Asp-313 together coordinate Mg(2+). Residues Lys-338, Arg-367, Ser-368, and Lys-389 each coordinate (2R)-2-phosphoglycerate. The active-site Proton acceptor is the Lys-338.

It belongs to the enolase family. It depends on Mg(2+) as a cofactor.

Its subcellular location is the cytoplasm. The protein localises to the secreted. The protein resides in the cell surface. The catalysed reaction is (2R)-2-phosphoglycerate = phosphoenolpyruvate + H2O. Its pathway is carbohydrate degradation; glycolysis; pyruvate from D-glyceraldehyde 3-phosphate: step 4/5. Its function is as follows. Catalyzes the reversible conversion of 2-phosphoglycerate (2-PG) into phosphoenolpyruvate (PEP). It is essential for the degradation of carbohydrates via glycolysis. In Methanococcus maripaludis (strain DSM 14266 / JCM 13030 / NBRC 101832 / S2 / LL), this protein is Enolase.